Here is a 409-residue protein sequence, read N- to C-terminus: Mitochondrial inner membrane protein oxa1-2 (409 aa).

Residues 76–96 traverse the membrane as a helical segment; it reads VVYTPSLPLSSSVLASFSFLP. Residues 97–114 are Mitochondrial intermembrane-facing; sequence HNILQNGLNTLHIWSGLP. The helical transmembrane segment at 115 to 135 threads the bilayer; the sequence is WWASIAACAVAMRIAVFPIML. At 136 to 188 the chain is on the mitochondrial matrix side; sequence KMMKTSAKLAIINPKVAEHMSVLSKAKAEGNSELMMQATTQIQNLYKVNNVNP. Residues 189–209 form a helical membrane-spanning segment; sequence LNLLSAPVFQGILFISFFYAL. At 210–235 the chain is on the mitochondrial intermembrane side; the sequence is KTMAGVPVEGFTDGGFWWVNDLSQPD. Residues 236–256 traverse the membrane as a helical segment; the sequence is PLHIFPVANGLLMLLNIELGS. At 257-275 the chain is on the mitochondrial matrix side; the sequence is ETGSNKVAMSPSMKKFFRF. The chain crosses the membrane as a helical span at residues 276 to 296; it reads LCLASPLFTMNFPMAIFMYWF. Topologically, residues 297–409 are mitochondrial intermembrane; the sequence is PSNVFSVFQG…SVTKPTEKKD (113 aa). The disordered stretch occupies residues 369–409; that stretch reads TDTNNEQKPTNNSTITKATTLSDNSQNDKSSSVTKPTEKKD. Residues 374–403 are compositionally biased toward polar residues; sequence EQKPTNNSTITKATTLSDNSQNDKSSSVTK.

The protein belongs to the OXA1/ALB3/YidC family.

It localises to the mitochondrion inner membrane. Required for the insertion of integral membrane proteins into the mitochondrial inner membrane. Essential for the activity and assembly of cytochrome c oxidase. It is essential for viability while oxa101 is not. When both are deleted the cell is non-viable, suggesting that oxa101 act as a back-up for oxa102. This is Mitochondrial inner membrane protein oxa1-2 (oxa102) from Schizosaccharomyces pombe (strain 972 / ATCC 24843) (Fission yeast).